Consider the following 155-residue polypeptide: uncharacterized protein (155 aa).

The first 21 residues, 1–21, serve as a signal peptide directing secretion; the sequence is MFFIVAAGFVIAALIAAIGMA. Positions 35–155 are disordered; that stretch reads GQTKPATTRP…PVYRPPEEMV (121 aa). Over residues 118 to 128 the composition is skewed to polar residues; sequence ATASNTPQNEA.

This is an uncharacterized protein from Schizosaccharomyces pombe (strain 972 / ATCC 24843) (Fission yeast).